The following is a 154-amino-acid chain: Large ribosomal subunit protein uL30 (154 aa).

Positions 114-139 are disordered; that stretch reads PVLRLHPPRGGHRGQKHPTAEGGQIG. The segment covering 119 to 129 has biased composition (basic residues); that stretch reads HPPRGGHRGQK.

Belongs to the universal ribosomal protein uL30 family. Part of the 50S ribosomal subunit.

This Haloquadratum walsbyi (strain DSM 16790 / HBSQ001) protein is Large ribosomal subunit protein uL30.